Consider the following 250-residue polypeptide: UDP-2,3-diacylglucosamine hydrolase (250 aa).

Residues Asp-8, His-10, Asp-41, Asn-79, and His-114 each coordinate Mn(2+). 79–80 (NR) is a binding site for substrate. Residues Asp-122, Ser-160, Asp-172, Gln-175, and His-203 each coordinate substrate. The Mn(2+) site is built by His-203 and His-205.

It belongs to the LpxH family. The cofactor is Mn(2+).

The protein localises to the cell inner membrane. It carries out the reaction UDP-2-N,3-O-bis[(3R)-3-hydroxytetradecanoyl]-alpha-D-glucosamine + H2O = 2-N,3-O-bis[(3R)-3-hydroxytetradecanoyl]-alpha-D-glucosaminyl 1-phosphate + UMP + 2 H(+). The protein operates within glycolipid biosynthesis; lipid IV(A) biosynthesis; lipid IV(A) from (3R)-3-hydroxytetradecanoyl-[acyl-carrier-protein] and UDP-N-acetyl-alpha-D-glucosamine: step 4/6. Hydrolyzes the pyrophosphate bond of UDP-2,3-diacylglucosamine to yield 2,3-diacylglucosamine 1-phosphate (lipid X) and UMP by catalyzing the attack of water at the alpha-P atom. Involved in the biosynthesis of lipid A, a phosphorylated glycolipid that anchors the lipopolysaccharide to the outer membrane of the cell. The polypeptide is UDP-2,3-diacylglucosamine hydrolase (Xylella fastidiosa (strain M23)).